The sequence spans 877 residues: Protein SEY1 homolog (877 aa).

The Cytoplasmic portion of the chain corresponds to 1–735; that stretch reads MVAFAGGART…LRSIEGEKQN (735 aa). A GB1/RHD3-type G domain is found at 49–307; it reads GITYHVVGVL…VPLDGIPSYL (259 aa). 59–66 is a binding site for GTP; sequence GGQSSGKS. A coiled-coil region spans residues 388–410; the sequence is RIDIVRKTEAELEEELLKVELKL. Residues 736-756 traverse the membrane as a helical segment; that stretch reads LPAWVLPVLLLLGWNEIWYVL. Over 757 to 759 the chain is Lumenal; it reads SSP. The helical transmembrane segment at 760–780 threads the bilayer; it reads VLLVVVVIIAAVFLRGFLLTQ. Topologically, residues 781 to 877 are cytoplasmic; it reads WAIFEETGPT…KEEEVPTQKE (97 aa). A disordered region spans residues 850 to 877; that stretch reads PTVLPPSTTSATLTRRLKKEEEVPTQKE. Over residues 867 to 877 the composition is skewed to basic and acidic residues; it reads KKEEEVPTQKE.

The protein belongs to the TRAFAC class dynamin-like GTPase superfamily. GB1/RHD3 GTPase family. RHD3 subfamily.

The protein resides in the endoplasmic reticulum membrane. In terms of biological role, probable GTP-binding protein that may be involved in cell development. The chain is Protein SEY1 homolog from Trypanosoma cruzi (strain CL Brener).